We begin with the raw amino-acid sequence, 552 residues long: Hydroxylamine reductase (552 aa).

[4Fe-4S] cluster is bound by residues Cys3, Cys6, Cys15, and Cys21. Residues His247, Glu271, Cys315, Cys407, Cys435, Cys460, Glu495, and Lys497 each coordinate hybrid [4Fe-2O-2S] cluster. Cys407 carries the post-translational modification Cysteine persulfide.

It belongs to the HCP family. [4Fe-4S] cluster is required as a cofactor. Requires hybrid [4Fe-2O-2S] cluster as cofactor.

The protein resides in the cytoplasm. The enzyme catalyses A + NH4(+) + H2O = hydroxylamine + AH2 + H(+). Catalyzes the reduction of hydroxylamine to form NH(3) and H(2)O. This Thermosipho melanesiensis (strain DSM 12029 / CIP 104789 / BI429) protein is Hydroxylamine reductase.